Consider the following 385-residue polypeptide: Bifunctional chorismate mutase/prephenate dehydratase (385 aa).

Residues 1–92 enclose the Chorismate mutase domain; it reads MPANNSLLIF…ESVATQKKLL (92 aa). Substrate-binding residues include Arg-11, Arg-28, Lys-39, Asp-48, Glu-52, Ser-84, and Gln-88. Positions 105-285 constitute a Prephenate dehydratase domain; sequence NFSFLGPKGS…NITRFILLNR (181 aa). A regulatory region spans residues 286–385; sequence NPKKISKNIP…PSEKITPIAP (100 aa). Residues 299-376 form the ACT domain; sequence TLIFTTGQEA…RFIKILGCYP (78 aa).

Its subcellular location is the cytoplasm. The catalysed reaction is chorismate = prephenate. It carries out the reaction prephenate + H(+) = 3-phenylpyruvate + CO2 + H2O. The protein operates within amino-acid biosynthesis; L-phenylalanine biosynthesis; phenylpyruvate from prephenate: step 1/1. It functions in the pathway metabolic intermediate biosynthesis; prephenate biosynthesis; prephenate from chorismate: step 1/1. Its function is as follows. Catalyzes the Claisen rearrangement of chorismate to prephenate and the decarboxylation/dehydration of prephenate to phenylpyruvate. This is Bifunctional chorismate mutase/prephenate dehydratase (pheA) from Buchnera aphidicola subsp. Acyrthosiphon pisum (strain APS) (Acyrthosiphon pisum symbiotic bacterium).